The chain runs to 516 residues: Keratin, type II cuticular Hb2 (516 aa).

The tract at residues 1-118 is head; that stretch reads MSCRNFQLSP…PTVQRVKRDE (118 aa). Residues 118-429 form the IF rod domain; that stretch reads EKEQIKCLNN…RLLEGEEHRL (312 aa). The coil 1A stretch occupies residues 119–153; the sequence is KEQIKCLNNRFASFINKVRFLEQKNKLLETKWNFM. Residues 154-163 are linker 1; it reads QQQRSCQSNM. Positions 164-264 are coil 1B; it reads EPLFEGYICA…FEEEIGLLQS (101 aa). Residues 265-281 form a linker 12 region; sequence QISETSVIVKMDNSREL. Residues 282-425 form a coil 2 region; that stretch reads DVDGIVAEIK…ATYRRLLEGE (144 aa). The segment at 426–516 is tail; that stretch reads EHRLCEGIGP…VGVGSNSCSR (91 aa).

The protein belongs to the intermediate filament family. As to quaternary structure, heterotetramer of two type I and two type II keratins.

The chain is Keratin, type II cuticular Hb2 (Krt82) from Mus musculus (Mouse).